The primary structure comprises 371 residues: 4-hydroxy-3-methylbut-2-en-1-yl diphosphate synthase (flavodoxin) (371 aa).

Residues Cys270, Cys273, Cys305, and Glu312 each coordinate [4Fe-4S] cluster.

This sequence belongs to the IspG family. The cofactor is [4Fe-4S] cluster.

It carries out the reaction (2E)-4-hydroxy-3-methylbut-2-enyl diphosphate + oxidized [flavodoxin] + H2O + 2 H(+) = 2-C-methyl-D-erythritol 2,4-cyclic diphosphate + reduced [flavodoxin]. The protein operates within isoprenoid biosynthesis; isopentenyl diphosphate biosynthesis via DXP pathway; isopentenyl diphosphate from 1-deoxy-D-xylulose 5-phosphate: step 5/6. Converts 2C-methyl-D-erythritol 2,4-cyclodiphosphate (ME-2,4cPP) into 1-hydroxy-2-methyl-2-(E)-butenyl 4-diphosphate. This is 4-hydroxy-3-methylbut-2-en-1-yl diphosphate synthase (flavodoxin) from Shewanella baltica (strain OS223).